The following is a 1077-amino-acid chain: RNA polymerase-associated protein CTR9 (1077 aa).

16 TPR repeats span residues 56 to 89, 138 to 174, 183 to 216, 218 to 251, 298 to 332, 338 to 371, 373 to 405, 421 to 455, 462 to 495, 501 to 534, 540 to 572, 664 to 697, 699 to 731, 732 to 764, 768 to 801, and 830 to 863; these read KEHW…FQNS, IGNM…EDHR, CLFL…NPVL, PDPR…NPKN, PVLL…SPMI, SESS…NEDN, LAKL…NESL, FDAK…TLAT, SRAY…MEFI, LEVL…VSDK, ITLE…HPAY, GKKS…DPFN, FAAQ…LDNE, DVQL…FDNE, PHIL…AKTA, and AETL…FREL. The segment covering 959-980 has biased composition (basic and acidic residues); it reads EREAMAISEHNVKDDSDLSDKD. Residues 959 to 1077 are disordered; that stretch reads EREAMAISEH…NDNDDNDGLF (119 aa). Serine 1015 and serine 1017 each carry phosphoserine. Composition is skewed to acidic residues over residues 1042–1051 and 1063–1077; these read FIEDSDEEEA and DNDE…DGLF.

In terms of assembly, component of the PAF1 complex which consists of at least CDC73, CTR9, LEO1, PAF1 and RTF1. Interacts with SPT6. Interacts with FACT subunits POB3 and SPT16.

The protein localises to the nucleus. The protein resides in the nucleoplasm. Its function is as follows. The PAF1 complex is a multifunctional complex. Involved in transcription initiation via genetic interactions with TATA-binding proteins. Involved in elongation. It regulates 3'-end formation of snR47 by modulating the recruitment or stable association of NRD1 and NAB3 with RNA polymerase II. Also has a role in transcription-coupled histone modification. Required for activation of RAD6 ubiquitin conjugate and the BRE1 ubiquitin ligase which ubiquitinate 'Lys-126' histone H2B. Activates the SET1 histone methyltransferase complex for methylation of 'Lys-4' of histone H3 and for methylation of 'Lys-73' of histone H3 by DOT1 and 'Lys-36' of histone H3 by SET2. In complex with PAF1, required for normal CLN1 and CLN2 G1 cyclin expression in late G1. Also has a role in chromosome segregation where it appears to be involved in microtubule placement. The sequence is that of RNA polymerase-associated protein CTR9 (CTR9) from Saccharomyces cerevisiae (strain ATCC 204508 / S288c) (Baker's yeast).